A 135-amino-acid chain; its full sequence is Small ribosomal subunit protein uS12 (135 aa).

Position 89 is a 3-methylthioaspartic acid (Asp89). Residues Ser101 to Arg135 are disordered. Low complexity predominate over residues Lys116–Arg135.

It belongs to the universal ribosomal protein uS12 family. In terms of assembly, part of the 30S ribosomal subunit. Contacts proteins S8 and S17. May interact with IF1 in the 30S initiation complex.

Its function is as follows. With S4 and S5 plays an important role in translational accuracy. Functionally, interacts with and stabilizes bases of the 16S rRNA that are involved in tRNA selection in the A site and with the mRNA backbone. Located at the interface of the 30S and 50S subunits, it traverses the body of the 30S subunit contacting proteins on the other side and probably holding the rRNA structure together. The combined cluster of proteins S8, S12 and S17 appears to hold together the shoulder and platform of the 30S subunit. This Chlorobium phaeobacteroides (strain DSM 266 / SMG 266 / 2430) protein is Small ribosomal subunit protein uS12.